The primary structure comprises 74 residues: Toxin Td6 (74 aa).

The first 8 residues, 1–8, serve as a signal peptide directing secretion; it reads IGMIVECE. An LCN-type CS-alpha/beta domain is found at 9 to 71; the sequence is KEGYLMEANG…IWDSATNTCG (63 aa). 4 disulfide bridges follow: cysteine 19/cysteine 70, cysteine 23/cysteine 45, cysteine 31/cysteine 51, and cysteine 35/cysteine 53. Arginine 72 is modified (arginine amide).

The protein belongs to the long (4 C-C) scorpion toxin superfamily. Sodium channel inhibitor family. Beta subfamily. Expressed by the venom gland.

The protein localises to the secreted. In terms of biological role, beta toxins bind voltage-independently at site-4 of sodium channels (Nav) and shift the voltage of activation toward more negative potentials thereby affecting sodium channel activation and promoting spontaneous and repetitive firing. In Tityus discrepans (Venezuelan scorpion), this protein is Toxin Td6.